The chain runs to 598 residues: Arginine--tRNA ligase (598 aa).

Positions 135-145 match the 'HIGH' region motif; the sequence is ANPTGPIHIGG. A disordered region spans residues 229-248; it reads VDGGTDEKGEPLGEGDSEQR. Over residues 231-248 the composition is skewed to basic and acidic residues; the sequence is GGTDEKGEPLGEGDSEQR.

The protein belongs to the class-I aminoacyl-tRNA synthetase family. In terms of assembly, monomer.

The protein localises to the cytoplasm. It carries out the reaction tRNA(Arg) + L-arginine + ATP = L-arginyl-tRNA(Arg) + AMP + diphosphate. The protein is Arginine--tRNA ligase of Bifidobacterium animalis subsp. lactis (strain AD011).